The primary structure comprises 125 residues: Mitochondrial import inner membrane translocase subunit tim16-A (125 aa).

The interval 58–110 is J-like; that stretch reads EAQQILNVSKLTPEEIQKNYEHLFKVNDKGLGGSFYLQSKVVRAKERLDQEME.

It belongs to the TIM16/PAM16 family. Probable component of the PAM complex at least composed of 1 mitochondrial HSP70 protein, 1 GRPE, 1 TIMM44, 1 TIMM16/PAM16 and 1 TIMM14. Associates with the TIM23 complex.

The protein localises to the mitochondrion inner membrane. Its function is as follows. Regulates ATP-dependent protein translocation into the mitochondrial matrix. The polypeptide is Mitochondrial import inner membrane translocase subunit tim16-A (pam16-a) (Xenopus laevis (African clawed frog)).